Reading from the N-terminus, the 254-residue chain is Uracil-DNA glycosylase (254 aa).

Aspartate 91 (proton acceptor) is an active-site residue.

It belongs to the uracil-DNA glycosylase (UDG) superfamily. UNG family.

Its subcellular location is the host nucleus. The catalysed reaction is Hydrolyzes single-stranded DNA or mismatched double-stranded DNA and polynucleotides, releasing free uracil.. Excises uracil residues from the DNA which can arise as a result of misincorporation of dUMP residues by DNA polymerase or deamination of cytosines. Therefore may reduce deleterious uracil incorporation into the viral genome, particularly in terminally differentiated cells which lack DNA repair enzymes. In Homo sapiens (Human), this protein is Uracil-DNA glycosylase (U81).